The sequence spans 887 residues: DNA gyrase subunit A (887 aa).

Residues 35 to 501 (LPDVRDGLKP…GFENLEDEDL (467 aa)) form the Topo IIA-type catalytic domain. The active-site O-(5'-phospho-DNA)-tyrosine intermediate is Tyr123. The short motif at 528–534 (QNRGGRG) is the GyrA-box element. The tract at residues 811–864 (KEDAEDETNEDEQSTSTVSEDGTEQQREAVVNDETPGNAIHTEVIDSEENDEDG) is disordered. Residues 813 to 823 (DAEDETNEDEQ) show a composition bias toward acidic residues.

The protein belongs to the type II topoisomerase GyrA/ParC subunit family. In terms of assembly, heterotetramer, composed of two GyrA and two GyrB chains. In the heterotetramer, GyrA contains the active site tyrosine that forms a transient covalent intermediate with DNA, while GyrB binds cofactors and catalyzes ATP hydrolysis.

The protein localises to the cytoplasm. The catalysed reaction is ATP-dependent breakage, passage and rejoining of double-stranded DNA.. Functionally, a type II topoisomerase that negatively supercoils closed circular double-stranded (ds) DNA in an ATP-dependent manner to modulate DNA topology and maintain chromosomes in an underwound state. Negative supercoiling favors strand separation, and DNA replication, transcription, recombination and repair, all of which involve strand separation. Also able to catalyze the interconversion of other topological isomers of dsDNA rings, including catenanes and knotted rings. Type II topoisomerases break and join 2 DNA strands simultaneously in an ATP-dependent manner. This chain is DNA gyrase subunit A, found in Staphylococcus aureus (strain COL).